Reading from the N-terminus, the 405-residue chain is Tryptophan synthase beta chain (405 aa).

Lys96 is modified (N6-(pyridoxal phosphate)lysine).

The protein belongs to the TrpB family. As to quaternary structure, tetramer of two alpha and two beta chains. The cofactor is pyridoxal 5'-phosphate.

It carries out the reaction (1S,2R)-1-C-(indol-3-yl)glycerol 3-phosphate + L-serine = D-glyceraldehyde 3-phosphate + L-tryptophan + H2O. Its pathway is amino-acid biosynthesis; L-tryptophan biosynthesis; L-tryptophan from chorismate: step 5/5. In terms of biological role, the beta subunit is responsible for the synthesis of L-tryptophan from indole and L-serine. The sequence is that of Tryptophan synthase beta chain from Clostridium botulinum (strain Eklund 17B / Type B).